The sequence spans 137 residues: Large ribosomal subunit protein uL14 (137 aa).

This sequence belongs to the universal ribosomal protein uL14 family. As to quaternary structure, component of the large ribosomal subunit. Mature ribosomes consist of a small (40S) and a large (60S) subunit. The 40S subunit contains about 32 different proteins and 1 molecule of RNA (18S). The 60S subunit contains 45 different proteins and 3 molecules of RNA (25S, 5.8S and 5S).

The protein localises to the cytoplasm. In terms of biological role, component of the ribosome, a large ribonucleoprotein complex responsible for the synthesis of proteins in the cell. The small ribosomal subunit (SSU) binds messenger RNAs (mRNAs) and translates the encoded message by selecting cognate aminoacyl-transfer RNA (tRNA) molecules. The large subunit (LSU) contains the ribosomal catalytic site termed the peptidyl transferase center (PTC), which catalyzes the formation of peptide bonds, thereby polymerizing the amino acids delivered by tRNAs into a polypeptide chain. The nascent polypeptides leave the ribosome through a tunnel in the LSU and interact with protein factors that function in enzymatic processing, targeting, and the membrane insertion of nascent chains at the exit of the ribosomal tunnel. The polypeptide is Large ribosomal subunit protein uL14 (Candida albicans (strain SC5314 / ATCC MYA-2876) (Yeast)).